The primary structure comprises 274 residues: 1D-myo-inositol 2-acetamido-2-deoxy-alpha-D-glucopyranoside deacetylase 2 (274 aa).

Positions 6, 9, and 140 each coordinate Zn(2+).

This sequence belongs to the MshB deacetylase family. It depends on Zn(2+) as a cofactor.

The catalysed reaction is 1D-myo-inositol 2-acetamido-2-deoxy-alpha-D-glucopyranoside + H2O = 1D-myo-inositol 2-amino-2-deoxy-alpha-D-glucopyranoside + acetate. Catalyzes the deacetylation of 1D-myo-inositol 2-acetamido-2-deoxy-alpha-D-glucopyranoside (GlcNAc-Ins) in the mycothiol biosynthesis pathway. This chain is 1D-myo-inositol 2-acetamido-2-deoxy-alpha-D-glucopyranoside deacetylase 2, found in Saccharopolyspora erythraea (strain ATCC 11635 / DSM 40517 / JCM 4748 / NBRC 13426 / NCIMB 8594 / NRRL 2338).